The following is a 337-amino-acid chain: Biotin synthase (337 aa).

Residues 39-267 (QEVQVCTLLS…KAMVRLSAGR (229 aa)) enclose the Radical SAM core domain. [4Fe-4S] cluster-binding residues include cysteine 54, cysteine 58, and cysteine 61. [2Fe-2S] cluster-binding residues include cysteine 98, cysteine 130, cysteine 190, and arginine 262.

Belongs to the radical SAM superfamily. Biotin synthase family. In terms of assembly, homodimer. [4Fe-4S] cluster serves as cofactor. Requires [2Fe-2S] cluster as cofactor.

It catalyses the reaction (4R,5S)-dethiobiotin + (sulfur carrier)-SH + 2 reduced [2Fe-2S]-[ferredoxin] + 2 S-adenosyl-L-methionine = (sulfur carrier)-H + biotin + 2 5'-deoxyadenosine + 2 L-methionine + 2 oxidized [2Fe-2S]-[ferredoxin]. It functions in the pathway cofactor biosynthesis; biotin biosynthesis; biotin from 7,8-diaminononanoate: step 2/2. Catalyzes the conversion of dethiobiotin (DTB) to biotin by the insertion of a sulfur atom into dethiobiotin via a radical-based mechanism. This chain is Biotin synthase, found in Cytophaga hutchinsonii (strain ATCC 33406 / DSM 1761 / CIP 103989 / NBRC 15051 / NCIMB 9469 / D465).